We begin with the raw amino-acid sequence, 202 residues long: GPI-anchored hemophore cfmB (202 aa).

Residues Met1 to Ala18 form the signal peptide. A CFEM domain is found at Gln19 to Thr108. 4 disulfides stabilise this stretch: Cys26/Cys67, Cys30/Cys62, Cys40/Cys48, and Cys50/Cys83. Residue Asp45 participates in heme binding. The tract at residues Pro94–Ala171 is disordered. A compositionally biased stretch (low complexity) spans Ala97 to Ala171. Residue Asn180 is the site of GPI-anchor amidated asparagine attachment. Positions Ala181–Leu202 are cleaved as a propeptide — removed in mature form.

Belongs to the RBT5 family. In terms of processing, the GPI-anchor is attached to the protein in the endoplasmic reticulum and serves to target the protein to the cell surface. There, the glucosamine-inositol phospholipid moiety is cleaved off and the GPI-modified mannoprotein is covalently attached via its lipidless GPI glycan remnant to the 1,6-beta-glucan of the outer cell wall layer.

It localises to the secreted. The protein localises to the cell wall. Its subcellular location is the cell membrane. GPI-anchored cell wall protein involved in stabilizing the cell wall. Not implicated in virulence, heme uptake and biofilm formation. This chain is GPI-anchored hemophore cfmB, found in Aspergillus fumigatus (strain ATCC MYA-4609 / CBS 101355 / FGSC A1100 / Af293) (Neosartorya fumigata).